Reading from the N-terminus, the 470-residue chain is 4-O-methyltransferase 1 (470 aa).

Residues 274-275 (GG), D297, 328-329 (DC), and K344 contribute to the S-adenosyl-L-methionine site. H348 serves as the catalytic Proton acceptor.

This sequence belongs to the class I-like SAM-binding methyltransferase superfamily. Cation-independent O-methyltransferase family. COMT subfamily.

Its function is as follows. S-adenosyl-L-methionine-dependent methyltransferase that preferentially catalyzes the methylation of 4-OH phenolic compounds like coniferyl alcohol, vanillyl alcohol and ferrulic acid. May play a role in promoting lignin degradation by methylating and inactivating free-hydroxyl phenolic compounds, products of lignin cleavage which are known inhibitors of lignin peroxidases. The sequence is that of 4-O-methyltransferase 1 from Phanerochaete chrysosporium (strain RP-78 / ATCC MYA-4764 / FGSC 9002) (White-rot fungus).